The chain runs to 217 residues: Phosphoribosylformylglycinamidine synthase subunit PurQ (217 aa).

The Glutamine amidotransferase type-1 domain occupies 2-217; the sequence is NIGIIVFPGS…GKSILSTLLS (216 aa). The Nucleophile role is filled by Cys-86. Active-site residues include His-194 and Glu-196.

Part of the FGAM synthase complex composed of 1 PurL, 1 PurQ and 2 PurS subunits.

The protein localises to the cytoplasm. It carries out the reaction N(2)-formyl-N(1)-(5-phospho-beta-D-ribosyl)glycinamide + L-glutamine + ATP + H2O = 2-formamido-N(1)-(5-O-phospho-beta-D-ribosyl)acetamidine + L-glutamate + ADP + phosphate + H(+). The catalysed reaction is L-glutamine + H2O = L-glutamate + NH4(+). It participates in purine metabolism; IMP biosynthesis via de novo pathway; 5-amino-1-(5-phospho-D-ribosyl)imidazole from N(2)-formyl-N(1)-(5-phospho-D-ribosyl)glycinamide: step 1/2. In terms of biological role, part of the phosphoribosylformylglycinamidine synthase complex involved in the purines biosynthetic pathway. Catalyzes the ATP-dependent conversion of formylglycinamide ribonucleotide (FGAR) and glutamine to yield formylglycinamidine ribonucleotide (FGAM) and glutamate. The FGAM synthase complex is composed of three subunits. PurQ produces an ammonia molecule by converting glutamine to glutamate. PurL transfers the ammonia molecule to FGAR to form FGAM in an ATP-dependent manner. PurS interacts with PurQ and PurL and is thought to assist in the transfer of the ammonia molecule from PurQ to PurL. This chain is Phosphoribosylformylglycinamidine synthase subunit PurQ, found in Prochlorococcus marinus (strain NATL2A).